A 155-amino-acid polypeptide reads, in one-letter code: MAASGEGKRRSRARSKLVQALYQYAVTGASAEDIERQFLAAGLGDIDVAYFRELIYGVTDRAAELDEQLSALLDRPLVQLDPVERSILRLGAFELSERLEVPYRVVIDESVELARRFGADQSHRYINGVLDRFGATVALRAAERGERKSRRGDRQ.

Belongs to the NusB family.

Functionally, involved in transcription antitermination. Required for transcription of ribosomal RNA (rRNA) genes. Binds specifically to the boxA antiterminator sequence of the ribosomal RNA (rrn) operons. The sequence is that of Transcription antitermination protein NusB from Halorhodospira halophila (strain DSM 244 / SL1) (Ectothiorhodospira halophila (strain DSM 244 / SL1)).